The following is an 80-amino-acid chain: Iota-conotoxin-like r11c (80 aa).

Positions 1–19 are cleaved as a signal peptide; the sequence is MKLCLTFLLVLMILASVTG. A propeptide spanning residues 20–35 is cleaved from the precursor; sequence EKSSKHTLSRAARVKN. 2 positions are modified to 4-hydroxyproline; partial: P38 and P47. Cystine bridges form between C41-C55, C48-C58, C54-C63, and C57-C72. At P65 the chain carries 4-hydroxyproline. A D-leucine modification is found at L78. Residue R80 is a propeptide, removed by a carboxypeptidase.

In terms of processing, the natural D-Leu form of the peptide is more potent than the synthetic L-Leu form. In terms of tissue distribution, expressed by the venom duct.

Its subcellular location is the secreted. Its function is as follows. Iota-conotoxins bind to voltage-gated sodium channels (Nav) and act as agonists by shifting the voltage-dependence of activation to more hyperpolarized levels. Causes circular motion, convulsions, copious urination, rigid paralysis and death upon intracranial injection into mice. Causes unbalanced swimming, swimming in diagonal and vertical motion and death, when injected intraperitoneally into goldfish. L-Leu and D-Leu forms are active on both nerve and muscle. The sequence is that of Iota-conotoxin-like r11c from Conus radiatus (Rayed cone).